We begin with the raw amino-acid sequence, 187 residues long: 3'-5' DNA exonuclease Cap18 (187 aa).

One can recognise an Exonuclease domain in the interval 9–173; sequence VSVDVETSGP…HDARYQAELF (165 aa). Positions 12, 25, 160, and 165 each coordinate Mg(2+). The active-site Proton donor/acceptor is H160.

This sequence belongs to the Cap18 exonuclease family. In terms of assembly, homodimer.

Functionally, effector component of a CBASS antivirus system. CBASS (cyclic oligonucleotide-based antiphage signaling system) provides immunity against bacteriophage. The CD-NTase protein synthesizes cyclic nucleotides in response to infection; these serve as specific second messenger signals. The signals activate a diverse range of effectors, leading to bacterial cell death and thus abortive phage infection. A type III CBASS system. A sequence non-specific 3'-5' DNA exonuclease that preferentially degrades ssDNA with 3' overhangs or a mismatch at the 3' end. Expression of this CBASS system (Cap17-CapW-CdnC-Cap7-Cap6-Cap18-Cap19) in a susceptible E.coli (strain JP313) confers resistance to bacteriophage lambda cI--. The chain is 3'-5' DNA exonuclease Cap18 from Escherichia coli.